The sequence spans 89 residues: Acyl carrier protein MbtL (89 aa).

The 76-residue stretch at 7–82 (ESVSAALTEI…DLEAAIQAKV (76 aa)) folds into the Carrier domain. O-(pantetheine 4'-phosphoryl)serine is present on Ser-42.

In terms of processing, 4'-phosphopantetheine is transferred from CoA to a specific serine of apo-ACP, leading to the activated holo-ACP form.

It is found in the cytoplasm. Its pathway is siderophore biosynthesis; mycobactin biosynthesis. In terms of biological role, acyl carrier protein involved in the formation of acyl-S-ACP intermediates within the mycobactin biosynthesis process. This Mycobacterium sp. (strain MCS) protein is Acyl carrier protein MbtL (mbtL).